A 307-amino-acid chain; its full sequence is UDP-3-O-acyl-N-acetylglucosamine deacetylase (307 aa).

Residues His78, His241, and Asp245 each contribute to the Zn(2+) site. The active-site Proton donor is His268.

This sequence belongs to the LpxC family. It depends on Zn(2+) as a cofactor.

The catalysed reaction is a UDP-3-O-[(3R)-3-hydroxyacyl]-N-acetyl-alpha-D-glucosamine + H2O = a UDP-3-O-[(3R)-3-hydroxyacyl]-alpha-D-glucosamine + acetate. The protein operates within glycolipid biosynthesis; lipid IV(A) biosynthesis; lipid IV(A) from (3R)-3-hydroxytetradecanoyl-[acyl-carrier-protein] and UDP-N-acetyl-alpha-D-glucosamine: step 2/6. Its function is as follows. Catalyzes the hydrolysis of UDP-3-O-myristoyl-N-acetylglucosamine to form UDP-3-O-myristoylglucosamine and acetate, the committed step in lipid A biosynthesis. This chain is UDP-3-O-acyl-N-acetylglucosamine deacetylase, found in Paracidovorax citrulli (strain AAC00-1) (Acidovorax citrulli).